We begin with the raw amino-acid sequence, 105 residues long: uncharacterized protein (105 aa).

The segment at 1–27 is disordered; that stretch reads MQSPAMKRIKSSSHSRWDGSGSVNEMP.

Its subcellular location is the mitochondrion. This is an uncharacterized protein from Arabidopsis thaliana (Mouse-ear cress).